We begin with the raw amino-acid sequence, 194 residues long: Small ribosomal subunit protein uS4c (194 aa).

The S4 RNA-binding domain maps to 82–143; the sequence is MRLDNILFRL…KQRSKALIQN (62 aa).

It belongs to the universal ribosomal protein uS4 family. Part of the 30S ribosomal subunit. Contacts protein S5. The interaction surface between S4 and S5 is involved in control of translational fidelity.

The protein resides in the plastid. It is found in the chloroplast. Functionally, one of the primary rRNA binding proteins, it binds directly to 16S rRNA where it nucleates assembly of the body of the 30S subunit. Its function is as follows. With S5 and S12 plays an important role in translational accuracy. This chain is Small ribosomal subunit protein uS4c (rps4), found in Sisyrinchium striatum (Satin flower).